The chain runs to 371 residues: Chaperone protein DnaJ (371 aa).

Positions 5-69 (DYYEVLGLSK…QKRAQYDQFG (65 aa)) constitute a J domain. Residues 133 to 215 (GKELNVEIPV…CHGSGKVRKR (83 aa)) form a CR-type zinc finger. 8 residues coordinate Zn(2+): C146, C149, C163, C166, C189, C192, C203, and C206. CXXCXGXG motif repeat units lie at residues 146–153 (CDTCKGSG), 163–170 (CKHCSGSG), 189–196 (CGHCSGTG), and 203–210 (CTTCHGSG).

Belongs to the DnaJ family. In terms of assembly, homodimer. Requires Zn(2+) as cofactor.

The protein resides in the cytoplasm. Its function is as follows. Participates actively in the response to hyperosmotic and heat shock by preventing the aggregation of stress-denatured proteins and by disaggregating proteins, also in an autonomous, DnaK-independent fashion. Unfolded proteins bind initially to DnaJ; upon interaction with the DnaJ-bound protein, DnaK hydrolyzes its bound ATP, resulting in the formation of a stable complex. GrpE releases ADP from DnaK; ATP binding to DnaK triggers the release of the substrate protein, thus completing the reaction cycle. Several rounds of ATP-dependent interactions between DnaJ, DnaK and GrpE are required for fully efficient folding. Also involved, together with DnaK and GrpE, in the DNA replication of plasmids through activation of initiation proteins. The chain is Chaperone protein DnaJ from Bacillus cereus (strain G9842).